The following is a 427-amino-acid chain: Inward rectifier potassium channel 2 (427 aa).

At 1–81 (MGSVRTNRYS…IFTTCVDIRW (81 aa)) the chain is on the cytoplasmic side. At C76 the chain carries S-nitrosocysteine. A helical transmembrane segment spans residues 82 to 106 (RWMLVIFCLAFVLSWLFFGCVFWLI). Over 107-128 (ALLHGDLDASKESKACVSEVNS) the chain is Extracellular. The segment at residues 129–140 (FTAAFLFSIETQ) is an intramembrane region (helical; Pore-forming). The pore-forming intramembrane region spans 141 to 147 (TTIGYGF). A Selectivity filter motif is present at residues 142 to 147 (TIGYGF). Over 148–156 (RCVTDECPI) the chain is Extracellular. A helical membrane pass occupies residues 157–178 (AVFMVVFQSIVGCIIDAFIIGA). Residues 179 to 427 (VMAKMAKPKK…PRPLRRESEI (249 aa)) are Cytoplasmic-facing. A polyphosphoinositide (PIP2)-binding region spans residues 181-208 (AKMAKPKKRNETLVFSHNAVIAMRDGKL). The segment at 384-427 (SKEEDDSENGVPESTSTDTPPDIDLHNQASVPLEPRPLRRESEI) is disordered. Residues 425–427 (SEI) carry the PDZ-binding motif.

The protein belongs to the inward rectifier-type potassium channel (TC 1.A.2.1) family. KCNJ2 subfamily. Homotetramer. Homomultimeric and heteromultimeric association with KCNJ4/Kir2.3. Can form heteromeric channels with Kir2.6/KCNJ18. Associates, via its PDZ-recognition domain, with a complex containing LIN7A, LIN7B, LIN7C, DLG1, CASK and APBA1. In terms of processing, S-nitrosylation increases the open probability and inward rectifying currents.

Its subcellular location is the cell membrane. It localises to the sarcolemma. The protein resides in the T-tubule. The enzyme catalyses K(+)(in) = K(+)(out). With respect to regulation, activated by phosphatidylinositol 4,5 biphosphate (PtdIns(4,5)P2). Functionally, inward rectifier potassium channels are characterized by a greater tendency to allow potassium to flow into the cell rather than out of it. Their voltage dependence is regulated by the concentration of extracellular potassium; as external potassium is raised, the voltage range of the channel opening shifts to more positive voltages. The inward rectification is mainly due to the blockage of outward current by internal magnesium. Blocked by external barium or cesium. Probably participates in establishing action potential waveform and excitability of neuronal and muscle tissues. The polypeptide is Inward rectifier potassium channel 2 (KCNJ2) (Cavia porcellus (Guinea pig)).